The following is a 154-amino-acid chain: 3-hydroxyacyl-[acyl-carrier-protein] dehydratase FabZ (154 aa).

Residue histidine 54 is part of the active site.

This sequence belongs to the thioester dehydratase family. FabZ subfamily.

The protein resides in the cytoplasm. The catalysed reaction is a (3R)-hydroxyacyl-[ACP] = a (2E)-enoyl-[ACP] + H2O. Involved in unsaturated fatty acids biosynthesis. Catalyzes the dehydration of short chain beta-hydroxyacyl-ACPs and long chain saturated and unsaturated beta-hydroxyacyl-ACPs. The polypeptide is 3-hydroxyacyl-[acyl-carrier-protein] dehydratase FabZ (Shewanella oneidensis (strain ATCC 700550 / JCM 31522 / CIP 106686 / LMG 19005 / NCIMB 14063 / MR-1)).